The sequence spans 365 residues: Mitogen-activated protein kinase 13 (365 aa).

In terms of domain architecture, Protein kinase spans 25-308 (YVSPTHVGSG…AAQALTHPFF (284 aa)). Position 31 to 39 (31 to 39 (VGSGAYGSV)) interacts with ATP. At Ser47 the chain carries Phosphoserine. Lys54 contacts ATP. The active-site Proton acceptor is Asp150. Thr180 bears the Phosphothreonine; by MAP2K3, MAP2K4, MAP2K6 and MAP2K7 mark. The TXY motif lies at 180–182 (TGY). Residue Tyr182 is modified to Phosphotyrosine; by MAP2K3, MAP2K4, MAP2K6 and MAP2K7. Residue Ser350 is modified to Phosphoserine.

This sequence belongs to the protein kinase superfamily. CMGC Ser/Thr protein kinase family. MAP kinase subfamily. As to quaternary structure, interacts with MAPK8IP2. Mg(2+) is required as a cofactor. Post-translationally, dually phosphorylated on Thr-180 and Tyr-182 by MAP2K3/MKK3, MAP2K4/MKK4, MAP2K6/MKK6 and MAP2K7/MKK7, which activates the enzyme. Dephosphorylated by dual specificity phosphatase DUSP1. In terms of tissue distribution, expressed in testes, pancreas, small intestine, lung and kidney. Abundant in macrophages, also present in neutrophils, CD4+ T-cells, and endothelial cells.

It carries out the reaction L-seryl-[protein] + ATP = O-phospho-L-seryl-[protein] + ADP + H(+). The catalysed reaction is L-threonyl-[protein] + ATP = O-phospho-L-threonyl-[protein] + ADP + H(+). Its activity is regulated as follows. Activated by phosphorylation on threonine and tyrosine by dual specificity kinases, MAP2K3/MKK3, MAP2K6/MKK6, MAP2K4/MKK4 and MAP2K7/MKK7. Activation by ultraviolet radiation, hyperosmotic shock, anisomycin or by TNF-alpha is mediated by MAP2K3/MKK3. Inhibited by dual specificity phosphatase DUSP1. Serine/threonine kinase which acts as an essential component of the MAP kinase signal transduction pathway. MAPK13 is one of the four p38 MAPKs which play an important role in the cascades of cellular responses evoked by extracellular stimuli such as pro-inflammatory cytokines or physical stress leading to direct activation of transcription factors such as ELK1 and ATF2. Accordingly, p38 MAPKs phosphorylate a broad range of proteins and it has been estimated that they may have approximately 200 to 300 substrates each. MAPK13 is one of the less studied p38 MAPK isoforms. Some of the targets are downstream kinases such as MAPKAPK2, which are activated through phosphorylation and further phosphorylate additional targets. Plays a role in the regulation of protein translation by phosphorylating and inactivating EEF2K. Involved in cytoskeletal remodeling through phosphorylation of MAPT and STMN1. Mediates UV irradiation induced up-regulation of the gene expression of CXCL14. Plays an important role in the regulation of epidermal keratinocyte differentiation, apoptosis and skin tumor development. Phosphorylates the transcriptional activator MYB in response to stress which leads to rapid MYB degradation via a proteasome-dependent pathway. MAPK13 also phosphorylates and down-regulates PRKD1 during regulation of insulin secretion in pancreatic beta cells. The sequence is that of Mitogen-activated protein kinase 13 (MAPK13) from Homo sapiens (Human).